The sequence spans 204 residues: Octanoyltransferase (204 aa).

The 176-residue stretch at Gln27–Leu202 folds into the BPL/LPL catalytic domain. Residues Arg65–His72, Ser132–Gly134, and Gly145–Ala147 contribute to the substrate site. Residue Cys163 is the Acyl-thioester intermediate of the active site.

It belongs to the LipB family.

Its subcellular location is the cytoplasm. The enzyme catalyses octanoyl-[ACP] + L-lysyl-[protein] = N(6)-octanoyl-L-lysyl-[protein] + holo-[ACP] + H(+). It participates in protein modification; protein lipoylation via endogenous pathway; protein N(6)-(lipoyl)lysine from octanoyl-[acyl-carrier-protein]: step 1/2. Its function is as follows. Catalyzes the transfer of endogenously produced octanoic acid from octanoyl-acyl-carrier-protein onto the lipoyl domains of lipoate-dependent enzymes. Lipoyl-ACP can also act as a substrate although octanoyl-ACP is likely to be the physiological substrate. This chain is Octanoyltransferase, found in Citrifermentans bemidjiense (strain ATCC BAA-1014 / DSM 16622 / JCM 12645 / Bem) (Geobacter bemidjiensis).